The sequence spans 272 residues: MICOS complex subunit MIC27 (272 aa).

The N-terminal 24 residues, 1–24, are a transit peptide targeting the mitochondrion; the sequence is MAAKVARLAAAASSLPFVCAVYAE. At 28 to 107 the chain is on the mitochondrial intermembrane side; that stretch reads SKSQLVKPKQ…YVYLKNPPPD (80 aa). The chain crosses the membrane as a helical span at residues 108–126; sequence FLPRVGIITISGLAGVVLA. Topologically, residues 127–134 are mitochondrial matrix; it reads RKDSRFKK. The helical transmembrane segment at 135-152 threads the bilayer; sequence IAYPLGLTTLGISVCYPA. The Mitochondrial intermembrane portion of the chain corresponds to 153–272; that stretch reads QAVVIAKITG…EDVDMYSTRS (120 aa). The interval 187–272 is disordered; that stretch reads SKLQQESKSV…EDVDMYSTRS (86 aa). 2 stretches are compositionally biased toward polar residues: residues 188 to 198 and 206 to 245; these read KLQQESKSVTQ and ISNV…TVKT.

The protein belongs to the apolipoprotein O/MICOS complex subunit Mic27 family. In terms of assembly, component of the mitochondrial contact site and cristae organizing system (MICOS) complex (also known as MINOS or MitOS complex).

The protein resides in the mitochondrion inner membrane. In terms of biological role, component of the MICOS complex, a large protein complex of the mitochondrial inner membrane that plays crucial roles in the maintenance of crista junctions, inner membrane architecture, and formation of contact sites to the outer membrane. The polypeptide is MICOS complex subunit MIC27 (APOOL) (Gallus gallus (Chicken)).